Here is a 1435-residue protein sequence, read N- to C-terminus: Dicer-like protein 2 (1435 aa).

The Helicase ATP-binding domain occupies 54 to 234 (MLSESLRQNI…LEVLEINLNA (181 aa)). An ATP-binding site is contributed by 67 to 74 (MDTGSGKT). The short motif at 175-178 (DEAH) is the DEAH box element. A Helicase C-terminal domain is found at 400–564 (KLIDFLVLEH…ENKRALEHIQ (165 aa)). The Dicer dsRNA-binding fold domain occupies 591-684 (ARNHLSHFCG…MPAHHHIDDE (94 aa)). RNase III domains follow at residues 956–1099 (ANEL…IDGG) and 1141–1323 (LSEI…IDSQ). Mg(2+)-binding residues include Glu1178, Asp1309, and Glu1312.

The protein belongs to the helicase family. Dicer subfamily. Requires Mg(2+) as cofactor. Mn(2+) is required as a cofactor.

Its function is as follows. Dicer-like endonuclease involved in cleaving double-stranded RNA in the RNA interference (RNAi) pathway. Produces 21 to 25 bp dsRNAs (siRNAs) which target the selective destruction of homologous RNAs leading to sequence-specific suppression of gene expression, called post-transcriptional gene silencing (PTGS). Part of a broad host defense response against viral infection and transposons. The polypeptide is Dicer-like protein 2 (DCL2) (Coccidioides immitis (strain RS) (Valley fever fungus)).